The following is a 498-amino-acid chain: 3-octaprenyl-4-hydroxybenzoate carboxy-lyase (498 aa).

A Mn(2+)-binding site is contributed by Asn175. Prenylated FMN-binding positions include 178 to 180 (IYR), 192 to 194 (RWL), and 197 to 198 (RG). Glu241 serves as a coordination point for Mn(2+). Catalysis depends on Asp290, which acts as the Proton donor.

Belongs to the UbiD family. As to quaternary structure, homohexamer. Prenylated FMN serves as cofactor. It depends on Mn(2+) as a cofactor.

The protein resides in the cell membrane. It carries out the reaction a 4-hydroxy-3-(all-trans-polyprenyl)benzoate + H(+) = a 2-(all-trans-polyprenyl)phenol + CO2. It participates in cofactor biosynthesis; ubiquinone biosynthesis. Catalyzes the decarboxylation of 3-octaprenyl-4-hydroxy benzoate to 2-octaprenylphenol, an intermediate step in ubiquinone biosynthesis. The chain is 3-octaprenyl-4-hydroxybenzoate carboxy-lyase from Yersinia pestis bv. Antiqua (strain Antiqua).